A 476-amino-acid polypeptide reads, in one-letter code: Aspartyl/glutamyl-tRNA(Asn/Gln) amidotransferase subunit B (476 aa).

It belongs to the GatB/GatE family. GatB subfamily. Heterotrimer of A, B and C subunits.

It carries out the reaction L-glutamyl-tRNA(Gln) + L-glutamine + ATP + H2O = L-glutaminyl-tRNA(Gln) + L-glutamate + ADP + phosphate + H(+). It catalyses the reaction L-aspartyl-tRNA(Asn) + L-glutamine + ATP + H2O = L-asparaginyl-tRNA(Asn) + L-glutamate + ADP + phosphate + 2 H(+). Allows the formation of correctly charged Asn-tRNA(Asn) or Gln-tRNA(Gln) through the transamidation of misacylated Asp-tRNA(Asn) or Glu-tRNA(Gln) in organisms which lack either or both of asparaginyl-tRNA or glutaminyl-tRNA synthetases. The reaction takes place in the presence of glutamine and ATP through an activated phospho-Asp-tRNA(Asn) or phospho-Glu-tRNA(Gln). The polypeptide is Aspartyl/glutamyl-tRNA(Asn/Gln) amidotransferase subunit B (Vesicomyosocius okutanii subsp. Calyptogena okutanii (strain HA)).